The sequence spans 31 residues: Photosystem II reaction center protein T (31 aa).

A helical transmembrane segment spans residues A3 to F23.

This sequence belongs to the PsbT family. As to quaternary structure, PSII is composed of 1 copy each of membrane proteins PsbA, PsbB, PsbC, PsbD, PsbE, PsbF, PsbH, PsbI, PsbJ, PsbK, PsbL, PsbM, PsbT, PsbY, PsbZ, Psb30/Ycf12, at least 3 peripheral proteins of the oxygen-evolving complex and a large number of cofactors. It forms dimeric complexes.

The protein localises to the plastid. The protein resides in the chloroplast thylakoid membrane. Its function is as follows. Found at the monomer-monomer interface of the photosystem II (PS II) dimer, plays a role in assembly and dimerization of PSII. PSII is a light-driven water plastoquinone oxidoreductase, using light energy to abstract electrons from H(2)O, generating a proton gradient subsequently used for ATP formation. In Euglena gracilis, this protein is Photosystem II reaction center protein T.